Here is a 213-residue protein sequence, read N- to C-terminus: Pyrrolidone-carboxylate peptidase (213 aa).

Active-site residues include E78, C141, and H165.

This sequence belongs to the peptidase C15 family. As to quaternary structure, homotetramer.

The protein resides in the cytoplasm. It carries out the reaction Release of an N-terminal pyroglutamyl group from a polypeptide, the second amino acid generally not being Pro.. Functionally, removes 5-oxoproline from various penultimate amino acid residues except L-proline. This Enterococcus faecalis (strain ATCC 700802 / V583) protein is Pyrrolidone-carboxylate peptidase.